A 256-amino-acid polypeptide reads, in one-letter code: 5-keto-4-deoxy-D-glucarate aldolase (256 aa).

The active-site Proton acceptor is the His50. Gln151 provides a ligand contact to substrate. Glu153 provides a ligand contact to Mg(2+). Residues Ser178 and Asp179 each contribute to the substrate site. Asp179 contributes to the Mg(2+) binding site.

Belongs to the HpcH/HpaI aldolase family. KDGluc aldolase subfamily. In terms of assembly, homohexamer; trimer of dimers. The cofactor is Mg(2+).

The enzyme catalyses 5-dehydro-4-deoxy-D-glucarate = 2-hydroxy-3-oxopropanoate + pyruvate. It catalyses the reaction 2-dehydro-3-deoxy-D-glucarate = 2-hydroxy-3-oxopropanoate + pyruvate. It participates in carbohydrate acid metabolism; galactarate degradation; D-glycerate from galactarate: step 2/3. In terms of biological role, catalyzes the reversible retro-aldol cleavage of both 5-keto-4-deoxy-D-glucarate and 2-keto-3-deoxy-D-glucarate to pyruvate and tartronic semialdehyde. The protein is 5-keto-4-deoxy-D-glucarate aldolase of Salmonella agona (strain SL483).